We begin with the raw amino-acid sequence, 537 residues long: Spore coat protein SP70 (537 aa).

The first 20 residues, 1–20 (MRILKLAALSCLLFIAPSLS), serve as a signal peptide directing secretion. The DSCP-N domain occupies 21-140 (INCDGLSKDQ…CQIPATGGGP (120 aa)). N-linked (GlcNAc...) asparagine glycosylation is present at N97. The region spanning 157–179 (SCDKVNCPNGYICTIVNQLAVCV) is the Follistatin-like 1 domain. Residues 183–246 (SSSSSSSSTT…GSHTTTGGST (64 aa)) are disordered. Follistatin-like domains lie at 250–272 (TCGN…AVCV), 278–296 (SCAN…GECI), 358–380 (TCKT…PTCV), and 389–415 (TCKD…EECC).

In terms of processing, phosphorylated and fucosylated.

This chain is Spore coat protein SP70 (cotB), found in Dictyostelium discoideum (Social amoeba).